Consider the following 410-residue polypeptide: Histidine--tRNA ligase (410 aa).

The protein belongs to the class-II aminoacyl-tRNA synthetase family. In terms of assembly, homodimer.

It is found in the cytoplasm. It carries out the reaction tRNA(His) + L-histidine + ATP = L-histidyl-tRNA(His) + AMP + diphosphate + H(+). The chain is Histidine--tRNA ligase from Campylobacter hominis (strain ATCC BAA-381 / DSM 21671 / CCUG 45161 / LMG 19568 / NCTC 13146 / CH001A).